Consider the following 455-residue polypeptide: Phosphoglucosamine mutase (455 aa).

Serine 108 serves as the catalytic Phosphoserine intermediate. Residues serine 108, aspartate 246, aspartate 248, and aspartate 250 each coordinate Mg(2+). Serine 108 carries the phosphoserine modification.

Belongs to the phosphohexose mutase family. Requires Mg(2+) as cofactor. Activated by phosphorylation.

It catalyses the reaction alpha-D-glucosamine 1-phosphate = D-glucosamine 6-phosphate. Catalyzes the conversion of glucosamine-6-phosphate to glucosamine-1-phosphate. In Frankia alni (strain DSM 45986 / CECT 9034 / ACN14a), this protein is Phosphoglucosamine mutase.